The primary structure comprises 187 residues: Ribosome-recycling factor (187 aa).

Belongs to the RRF family.

It is found in the cytoplasm. Responsible for the release of ribosomes from messenger RNA at the termination of protein biosynthesis. May increase the efficiency of translation by recycling ribosomes from one round of translation to another. The protein is Ribosome-recycling factor of Nitrobacter winogradskyi (strain ATCC 25391 / DSM 10237 / CIP 104748 / NCIMB 11846 / Nb-255).